Consider the following 745-residue polypeptide: MEVMNLIEQPIKVTEWQQTYTYDSGIHSGVNTCVPSVSSKGIMDEDDACGRQYTLKKTTTYTQGVPQNQGDLEYQMSTTARAKRVREAMCPGVSGEDSSLLLATQVEGQTTNLQRLAEPSQLLKSAIVHLINYQDDAELATRALPELTKLLNDEDPVVVTKAAMIVNQLSKKEASRRALMGSPQLVAAVVRTMQNTSDLDTARCTTSILHNLSHHREGLLAIFKSGGIPALVRMLSSPVESVLFYAITTLHNLLLYQEGAKMAVRLADGLQKMVPLLNKNNPKFLAITTDCLQLLAYGNQESKLIILANGGPQGLVQIMRNYSYEKLLWTTSRVLKVLSVCPSNKPAIVEAGGMQALGKHLTSNSPRLVQNCLWTLRNLSDVATKQEGLESVLKILVNQLSVDDVNVLTCATGTLSNLTCNNSKNKTLVTQNSGVEALIHAILRAGDKDDITEPAVCALRHLTSRHPEAEMAQNSVRLNYGIPAIVKLLNQPNQWPLVKATIGLIRNLALCPANHAPLQEAAVIPRLVQLLVKAHQDAQRHVAAGTQQPYTDGVRMEEIVEGCTGALHILARDPMNRMEIFRLNTIPLFVQLLYSSVENIQRVAAGVLCELAQDKEAADAIDAEGASAPLMELLHSRNEGTATYAAAVLFRISEDKNPDYRKRVSVELTNSLFKHDPAAWEAAQSMIPINEPYADDMDATYRPMYSSDVPLDPLDMHMDLDGDYPMDTYSDGLRPPYPTADHMLA.

Met-1 carries the post-translational modification N-acetylmethionine. O-linked (GlcNAc) threonine glycosylation is present at Thr-14. Phosphoserine is present on residues Ser-99 and Ser-125. ARM repeat units lie at residues 132–171 (NYQD…QLSK), 172–215 (KEAS…LSHH), 216–255 (REGL…NLLL), 258–297 (EGAK…LLAY), 298–341 (GNQE…LSVC), 342–381 (PSNK…NLSD), 383–420 (ATKQ…NLTC), 423–464 (SKNK…HLTS), 470–510 (EMAQ…NLAL), 512–551 (PANH…QPYT), 574–613 (PMNR…ELAQ), and 615–661 (KEAA…PDYR). Positions 132 to 297 (NYQDDAELAT…TTDCLQLLAY (166 aa)) are interaction with DSC1 and DSG1. Ser-182 carries the post-translational modification Phosphoserine. The interaction with DSC1 stretch occupies residues 574–661 (PMNRMEIFRL…ISEDKNPDYR (88 aa)). 2 positions are modified to phosphoserine: Ser-665 and Ser-730.

This sequence belongs to the beta-catenin family. In terms of assembly, homodimer. Component of an E-cadherin/catenin adhesion complex composed of at least E-cadherin/CDH1 and gamma-catenin/JUP, and possibly alpha-catenin/CTNNA1; the complex is located to adherens junctions. The stable association of CTNNA1 is controversial as CTNNA1 was shown not to bind to F-actin when assembled in the complex. Interacts with MUC1. Interacts with CAV1. Interacts with PTPRJ. Interacts with DSG1. Interacts with DSC1 and DSC2. Interacts with PKP2. Interacts with PKP3 (via N-terminus); the interaction is required for PKP3 localization to desmosome cell-cell junctions. Interacts with DSG4. May be phosphorylated by FER. Expressed in the mammary epithelium (at protein level).

It is found in the cell junction. It localises to the adherens junction. Its subcellular location is the desmosome. The protein resides in the cytoplasm. The protein localises to the cytoskeleton. It is found in the cell membrane. It localises to the nucleus. In terms of biological role, common junctional plaque protein. The membrane-associated plaques are architectural elements in an important strategic position to influence the arrangement and function of both the cytoskeleton and the cells within the tissue. The presence of plakoglobin in both the desmosomes and in the intermediate junctions suggests that it plays a central role in the structure and function of submembranous plaques. Acts as a substrate for VE-PTP and is required by it to stimulate VE-cadherin function in endothelial cells. Can replace beta-catenin in E-cadherin/catenin adhesion complexes which are proposed to couple cadherins to the actin cytoskeleton. In Mus musculus (Mouse), this protein is Junction plakoglobin.